A 22-amino-acid chain; its full sequence is leu leader peptide (22 aa).

The tract at residues 1 to 22 (MLHHMTSRANLLLLRRGGSQRS) is disordered. The span at 11–22 (LLLLRRGGSQRS) shows a compositional bias: low complexity.

In terms of biological role, involved in control of the biosynthesis of leucine. The chain is leu leader peptide (leuL) from Corynebacterium glutamicum (strain ATCC 13032 / DSM 20300 / JCM 1318 / BCRC 11384 / CCUG 27702 / LMG 3730 / NBRC 12168 / NCIMB 10025 / NRRL B-2784 / 534).